The chain runs to 136 residues: UPF0225 protein Mpe_A2093 (136 aa).

Belongs to the UPF0225 family.

This chain is UPF0225 protein Mpe_A2093, found in Methylibium petroleiphilum (strain ATCC BAA-1232 / LMG 22953 / PM1).